A 335-amino-acid polypeptide reads, in one-letter code: Nucleoid-associated protein YejK (335 aa).

It belongs to the YejK family.

It is found in the cytoplasm. The protein resides in the nucleoid. This is Nucleoid-associated protein YejK from Salmonella arizonae (strain ATCC BAA-731 / CDC346-86 / RSK2980).